The chain runs to 118 residues: V-type proton ATPase subunit G 3 (118 aa).

The stretch at 3 to 54 (SQSQGIQQLLQAEKRAKDKLEEAKKRKNKRLRQAKEEATADIDQYRLKREAD) forms a coiled coil. The segment at 19–39 (KDKLEEAKKRKNKRLRQAKEE) is disordered.

The protein belongs to the V-ATPase G subunit family. In terms of assembly, V-ATPase is a heteromultimeric enzyme made up of two complexes: the ATP-hydrolytic V1 complex and the proton translocation V0 complex. The V1 complex consists of three catalytic AB heterodimers that form a heterohexamer, three peripheral stalks each consisting of EG heterodimers, one central rotor including subunits D and F, and the regulatory subunits C and H. The proton translocation complex V0 consists of the proton transport subunit a, a ring of proteolipid subunits c9c'', rotary subunit d, subunits e and f, and two accessory subunits.

Its function is as follows. Subunit of the V1 complex of vacuolar(H+)-ATPase (V-ATPase), a multisubunit enzyme composed of a peripheral complex (V1) that hydrolyzes ATP and a membrane integral complex (V0) that translocates protons. V-ATPase is responsible for acidifying and maintaining the pH of intracellular compartments and in some cell types, is targeted to the plasma membrane, where it is responsible for acidifying the extracellular environment. In Xenopus laevis (African clawed frog), this protein is V-type proton ATPase subunit G 3 (atp6v1g3).